The following is a 259-amino-acid chain: MKPTITSWADEVEADYVDGLPPSKEHVDGDYKHVTEYKFNDEGKKIKVVRSFKIEKKIVSRAVAKRRNWTKFGDSKLDKPGPNSYTTKVADEILMNYMGSKDFEHTQDPLDASKPIAKCRICNGEHWSVKCPYKGTSMDIESKAIAAATAAVGETNKAGKYVPPFLKEGGKGRERDDSSAVRISNLSESMTEDDLEELVKKIGPHTKMYLAREKNSGLCKGFAYVHFKYRKDAAEAIEILNGHGYDHLILSVEWSKPQN.

Positions Ser-179–Pro-257 constitute an RRM domain.

Belongs to the eIF-3 subunit G family. As to quaternary structure, component of the eukaryotic translation initiation factor 3 (eIF-3) complex. The eIF-3 complex interacts with pix.

The protein resides in the cytoplasm. Functionally, RNA-binding component of the eukaryotic translation initiation factor 3 (eIF-3) complex, which is involved in protein synthesis of a specialized repertoire of mRNAs and, together with other initiation factors, stimulates binding of mRNA and methionyl-tRNAi to the 40S ribosome. The eIF-3 complex specifically targets and initiates translation of a subset of mRNAs involved in cell proliferation. This subunit can bind 18S rRNA. The protein is Eukaryotic translation initiation factor 3 subunit G-2 of Drosophila mojavensis (Fruit fly).